We begin with the raw amino-acid sequence, 90 residues long: Large ribosomal subunit protein bL27 (90 aa).

The disordered stretch occupies residues 1–20; the sequence is MAHKKAGGSSRNGRDSAGKR.

This sequence belongs to the bacterial ribosomal protein bL27 family.

This chain is Large ribosomal subunit protein bL27, found in Nitrobacter hamburgensis (strain DSM 10229 / NCIMB 13809 / X14).